Consider the following 396-residue polypeptide: S-adenosylmethionine synthase (396 aa).

His-16 serves as a coordination point for ATP. Asp-18 is a binding site for Mg(2+). Position 44 (Glu-44) interacts with K(+). 2 residues coordinate L-methionine: Glu-57 and Gln-100. The tract at residues 100–110 (QSVDIAQGVDR) is flexible loop. Residues 165 to 167 (DAK), Asp-240, 246 to 247 (RK), Ala-263, and Lys-267 contribute to the ATP site. Asp-240 is an L-methionine binding site. Lys-271 is a binding site for L-methionine.

The protein belongs to the AdoMet synthase family. Homotetramer; dimer of dimers. Mg(2+) is required as a cofactor. It depends on K(+) as a cofactor.

The protein localises to the cytoplasm. It carries out the reaction L-methionine + ATP + H2O = S-adenosyl-L-methionine + phosphate + diphosphate. Its pathway is amino-acid biosynthesis; S-adenosyl-L-methionine biosynthesis; S-adenosyl-L-methionine from L-methionine: step 1/1. Functionally, catalyzes the formation of S-adenosylmethionine (AdoMet) from methionine and ATP. The overall synthetic reaction is composed of two sequential steps, AdoMet formation and the subsequent tripolyphosphate hydrolysis which occurs prior to release of AdoMet from the enzyme. The protein is S-adenosylmethionine synthase of Pseudomonas entomophila (strain L48).